Reading from the N-terminus, the 504-residue chain is D-alanine--D-alanyl carrier protein ligase (504 aa).

152 to 153 provides a ligand contact to ATP; the sequence is TS. A D-alanine-binding site is contributed by aspartate 197. 292-297 provides a ligand contact to ATP; that stretch reads NTYGPT. Valine 301 provides a ligand contact to D-alanine. Residues aspartate 383, 394-397, and lysine 492 each bind ATP; that span reads YNGR. Position 492 (lysine 492) interacts with D-alanine.

Belongs to the ATP-dependent AMP-binding enzyme family. DltA subfamily.

Its subcellular location is the cytoplasm. The enzyme catalyses holo-[D-alanyl-carrier protein] + D-alanine + ATP = D-alanyl-[D-alanyl-carrier protein] + AMP + diphosphate. Its pathway is cell wall biogenesis; lipoteichoic acid biosynthesis. Catalyzes the first step in the D-alanylation of lipoteichoic acid (LTA), the activation of D-alanine and its transfer onto the D-alanyl carrier protein (Dcp) DltC. In an ATP-dependent two-step reaction, forms a high energy D-alanyl-AMP intermediate, followed by transfer of the D-alanyl residue as a thiol ester to the phosphopantheinyl prosthetic group of the Dcp. D-alanylation of LTA plays an important role in modulating the properties of the cell wall in Gram-positive bacteria, influencing the net charge of the cell wall. The sequence is that of D-alanine--D-alanyl carrier protein ligase from Bacillus cereus (strain ZK / E33L).